Consider the following 186-residue polypeptide: Elongation factor P (186 aa).

Belongs to the elongation factor P family.

It is found in the cytoplasm. It participates in protein biosynthesis; polypeptide chain elongation. In terms of biological role, involved in peptide bond synthesis. Stimulates efficient translation and peptide-bond synthesis on native or reconstituted 70S ribosomes in vitro. Probably functions indirectly by altering the affinity of the ribosome for aminoacyl-tRNA, thus increasing their reactivity as acceptors for peptidyl transferase. This chain is Elongation factor P, found in Acidobacterium capsulatum (strain ATCC 51196 / DSM 11244 / BCRC 80197 / JCM 7670 / NBRC 15755 / NCIMB 13165 / 161).